Consider the following 1002-residue polypeptide: Chitin synthase II (1002 aa).

Disordered stretches follow at residues 1–165 (MDRP…GRTS) and 178–209 (LDGSDDVFGPETDLSDSRPLPTHRDSFMSGSQ). Residues 63–78 (SYQPSVVSSHSRSASV) are compositionally biased toward low complexity. The N-linked (GlcNAc...) asparagine glycan is linked to Asn123. Asn336 carries N-linked (GlcNAc...) asparagine glycosylation. 8 consecutive transmembrane segments (helical) span residues 627–647 (WLNGAFFAAVYSLVQFRQILA), 669–689 (LLFTYFSLANFYLTFYFVAGG), 704–724 (SVIFTILRYTCVLLIATQFIL), 740–760 (SMIIYGVIMTYTSFACIYIVV), 780–800 (LIVSMASTIGLYFVMSFLYLE), 808–828 (SLQYFLLLPSYICTLQVYAFC), 906–926 (YMVVTWMIANGILAMAVSEIY), and 940–960 (ILWAVASLAIFRALGSTTFAI).

It belongs to the chitin synthase family. Class II subfamily. Expressed in hyphal bodies.

Its subcellular location is the cell membrane. The catalysed reaction is [(1-&gt;4)-N-acetyl-beta-D-glucosaminyl](n) + UDP-N-acetyl-alpha-D-glucosamine = [(1-&gt;4)-N-acetyl-beta-D-glucosaminyl](n+1) + UDP + H(+). Its function is as follows. Polymerizes chitin, a structural polymer of the cell wall and septum, by transferring the sugar moiety of UDP-GlcNAc to the non-reducing end of the growing chitin polymer. Contributes to the production of conidia and the ability of fungal conidia to germinate. Involved in fungal stress tolerances. The chain is Chitin synthase II from Metarhizium acridum (strain CQMa 102).